A 461-amino-acid chain; its full sequence is MVLENILEKIVKSKINWIKHRKKIQPLSSFQHNITLSDRNFIQALKNIHPALILEFKKHSPSLGILNDFNPEFVAKIYKKYASAISVLTDEKYFHGKFEFIPIIRNIAVQQPILCKDFFIDPYQIYLARYYQADSILLMLSILKDNQYRALEKLAYSLNMAVLTEINNKMELDRAINLNAKIIGINNRNLKNFSISTSNTYKLASKISKNTIVISESGINSYNQLRKFKNLVQGFLIGSALMSKKDLEHAVHKIITGNNKICGLTRVEDARMSKDFGAIYGGFIFCKSSKRYVNLKKAMNITKNVHMKYIGVFCNENISTISYIIDKIPLYAIQLHGNENQFYIDCLKKKIPKCVRVWKAISLNGEKKHANNLFDNVNKHVFDNIHGGSGTPFNWYLLKNYNLKNVILAGGLNIKNCISASDLGCFGLDFNSGIEISPGLKDKKKTFLIFRSLREHKTIIH.

Positions 1-258 are indole-3-glycerol phosphate synthase; that stretch reads MVLENILEKI…HAVHKIITGN (258 aa). Residues 259 to 461 form an N-(5'-phosphoribosyl)anthranilate isomerase region; the sequence is NKICGLTRVE…SLREHKTIIH (203 aa).

It in the N-terminal section; belongs to the TrpC family. The protein in the C-terminal section; belongs to the TrpF family.

It catalyses the reaction N-(5-phospho-beta-D-ribosyl)anthranilate = 1-(2-carboxyphenylamino)-1-deoxy-D-ribulose 5-phosphate. The catalysed reaction is 1-(2-carboxyphenylamino)-1-deoxy-D-ribulose 5-phosphate + H(+) = (1S,2R)-1-C-(indol-3-yl)glycerol 3-phosphate + CO2 + H2O. Its pathway is amino-acid biosynthesis; L-tryptophan biosynthesis; L-tryptophan from chorismate: step 3/5. It participates in amino-acid biosynthesis; L-tryptophan biosynthesis; L-tryptophan from chorismate: step 4/5. Bifunctional enzyme that catalyzes two sequential steps of tryptophan biosynthetic pathway. The first reaction is catalyzed by the isomerase, coded by the TrpF domain; the second reaction is catalyzed by the synthase, coded by the TrpC domain. The polypeptide is Tryptophan biosynthesis protein TrpCF (trpC) (Buchnera aphidicola subsp. Schlechtendalia chinensis).